Here is a 952-residue protein sequence, read N- to C-terminus: Plasma membrane ATPase 4 (952 aa).

The Cytoplasmic portion of the chain corresponds to 1 to 64; the sequence is MAKAISLEEI…EKNESKILKF (64 aa). A helical membrane pass occupies residues 65-84; the sequence is LGFMWNPLSWVMEAAAVMAI. Topologically, residues 85 to 96 are extracellular; that stretch reads ALANGDGKPPDW. Residues 97-117 form a helical membrane-spanning segment; that stretch reads QDFIGIICLLVINSTISFIEE. At 118-246 the chain is on the cytoplasmic side; the sequence is NNAGNAAAAL…GHFQKVLTAI (129 aa). Residues 247-267 form a helical membrane-spanning segment; that stretch reads GNFCICSIAIGMLVEIIVMYP. Over 268-277 the chain is Extracellular; it reads IQHRKYRDGI. The chain crosses the membrane as a helical span at residues 278–299; that stretch reads DNLLVLLIGGIPIAMPTVLSVT. Over 300–646 the chain is Cytoplasmic; the sequence is MAIGSHRLSQ…TSRAIFQRMK (347 aa). Asp332 functions as the 4-aspartylphosphate intermediate in the catalytic mechanism. Asp591 and Asp595 together coordinate Mg(2+). A helical transmembrane segment spans residues 647 to 668; the sequence is NYTIYAVSITIRIVFGFMFIAL. Residues 669–673 are Extracellular-facing; that stretch reads IWKYD. The chain crosses the membrane as a helical span at residues 674-696; it reads FSAFMVLIIAILNDGTIMTISKD. The Cytoplasmic portion of the chain corresponds to 697–712; sequence RVKPSPMPDSWKLKEI. A helical transmembrane segment spans residues 713–733; the sequence is FATGVVLGGYQALMTVVFFWA. The Extracellular portion of the chain corresponds to 734-754; sequence MHDTDFFSDKFGVKSLRNSDE. A helical membrane pass occupies residues 755–775; it reads EMMSALYLQVSIISQALIFVT. At 776 to 787 the chain is on the cytoplasmic side; it reads RSRSWSFLERPG. The chain crosses the membrane as a helical span at residues 788-808; sequence MLLVIAFMIAQLVATLIAVYA. At 809–817 the chain is on the extracellular side; that stretch reads NWAFARVKG. The chain crosses the membrane as a helical span at residues 818-838; it reads CGWGWAGVIWLYSIIFYLPLD. Over 839 to 952 the chain is Cytoplasmic; the sequence is IMKFAIRYIL…IETIQQHYTV (114 aa).

It belongs to the cation transport ATPase (P-type) (TC 3.A.3) family. Type IIIA subfamily. As to expression, expressed at high levels in root, stem, leaf and flower.

It localises to the cell membrane. The catalysed reaction is ATP + H2O + H(+)(in) = ADP + phosphate + 2 H(+)(out). Functionally, the plasma membrane ATPase of plants and fungi is a hydrogen ion pump. The proton gradient it generates drives the active transport of nutrients by H(+)-symport. The resulting external acidification and/or internal alkinization may mediate growth responses. This is Plasma membrane ATPase 4 (PMA4) from Nicotiana plumbaginifolia (Leadwort-leaved tobacco).